The sequence spans 355 residues: Uroporphyrinogen decarboxylase (355 aa).

Substrate is bound by residues 27-31, Asp-77, Tyr-154, Thr-209, and His-328; that span reads RQAGR.

This sequence belongs to the uroporphyrinogen decarboxylase family. Homodimer.

Its subcellular location is the cytoplasm. The catalysed reaction is uroporphyrinogen III + 4 H(+) = coproporphyrinogen III + 4 CO2. Its pathway is porphyrin-containing compound metabolism; protoporphyrin-IX biosynthesis; coproporphyrinogen-III from 5-aminolevulinate: step 4/4. Functionally, catalyzes the decarboxylation of four acetate groups of uroporphyrinogen-III to yield coproporphyrinogen-III. This is Uroporphyrinogen decarboxylase from Vibrio campbellii (strain ATCC BAA-1116).